The sequence spans 133 residues: UPF0225 protein BP2036 (133 aa).

This sequence belongs to the UPF0225 family.

This Bordetella pertussis (strain Tohama I / ATCC BAA-589 / NCTC 13251) protein is UPF0225 protein BP2036.